The chain runs to 184 residues: NADH-quinone oxidoreductase subunit B (184 aa).

4 residues coordinate [4Fe-4S] cluster: C37, C38, C103, and C132.

It belongs to the complex I 20 kDa subunit family. As to quaternary structure, NDH-1 is composed of 14 different subunits. Subunits NuoB, C, D, E, F, and G constitute the peripheral sector of the complex. [4Fe-4S] cluster serves as cofactor.

The protein localises to the cell membrane. The enzyme catalyses a quinone + NADH + 5 H(+)(in) = a quinol + NAD(+) + 4 H(+)(out). Its function is as follows. NDH-1 shuttles electrons from NADH, via FMN and iron-sulfur (Fe-S) centers, to quinones in the respiratory chain. The immediate electron acceptor for the enzyme in this species is believed to be a menaquinone. Couples the redox reaction to proton translocation (for every two electrons transferred, four hydrogen ions are translocated across the cytoplasmic membrane), and thus conserves the redox energy in a proton gradient. This is NADH-quinone oxidoreductase subunit B from Mycobacterium marinum (strain ATCC BAA-535 / M).